Reading from the N-terminus, the 595-residue chain is Aspartate--tRNA(Asp/Asn) ligase (595 aa).

Glu-171 provides a ligand contact to L-aspartate. Positions 195–198 (QLFK) are aspartate. Arg-217 contacts L-aspartate. ATP contacts are provided by residues 217 to 219 (RDE) and Gln-226. Residue His-454 coordinates L-aspartate. Position 488 (Glu-488) interacts with ATP. Arg-495 contributes to the L-aspartate binding site. 540-543 (GLDR) provides a ligand contact to ATP.

Belongs to the class-II aminoacyl-tRNA synthetase family. Type 1 subfamily. As to quaternary structure, homodimer.

It is found in the cytoplasm. The enzyme catalyses tRNA(Asx) + L-aspartate + ATP = L-aspartyl-tRNA(Asx) + AMP + diphosphate. Its function is as follows. Aspartyl-tRNA synthetase with relaxed tRNA specificity since it is able to aspartylate not only its cognate tRNA(Asp) but also tRNA(Asn). Reaction proceeds in two steps: L-aspartate is first activated by ATP to form Asp-AMP and then transferred to the acceptor end of tRNA(Asp/Asn). The polypeptide is Aspartate--tRNA(Asp/Asn) ligase (Bordetella petrii (strain ATCC BAA-461 / DSM 12804 / CCUG 43448)).